The sequence spans 155 residues: 3-hydroxyacyl-[acyl-carrier-protein] dehydratase FabZ (155 aa).

Residue His-61 is part of the active site.

Belongs to the thioester dehydratase family. FabZ subfamily.

Its subcellular location is the cytoplasm. It carries out the reaction a (3R)-hydroxyacyl-[ACP] = a (2E)-enoyl-[ACP] + H2O. Functionally, involved in unsaturated fatty acids biosynthesis. Catalyzes the dehydration of short chain beta-hydroxyacyl-ACPs and long chain saturated and unsaturated beta-hydroxyacyl-ACPs. This chain is 3-hydroxyacyl-[acyl-carrier-protein] dehydratase FabZ, found in Synechococcus sp. (strain ATCC 27144 / PCC 6301 / SAUG 1402/1) (Anacystis nidulans).